A 145-amino-acid chain; its full sequence is Transcriptional regulator MraZ (145 aa).

SpoVT-AbrB domains follow at residues 5-49 (TYNH…LESE) and 78-121 (TYKV…AKEV).

This sequence belongs to the MraZ family. Forms oligomers.

It localises to the cytoplasm. The protein localises to the nucleoid. This Ureaplasma urealyticum serovar 10 (strain ATCC 33699 / Western) protein is Transcriptional regulator MraZ.